The sequence spans 307 residues: UDP-3-O-acyl-N-acetylglucosamine deacetylase (307 aa).

Zn(2+)-binding residues include His-80, His-239, and Asp-243. Residue His-266 is the Proton donor of the active site.

The protein belongs to the LpxC family. Zn(2+) is required as a cofactor.

It catalyses the reaction a UDP-3-O-[(3R)-3-hydroxyacyl]-N-acetyl-alpha-D-glucosamine + H2O = a UDP-3-O-[(3R)-3-hydroxyacyl]-alpha-D-glucosamine + acetate. The protein operates within glycolipid biosynthesis; lipid IV(A) biosynthesis; lipid IV(A) from (3R)-3-hydroxytetradecanoyl-[acyl-carrier-protein] and UDP-N-acetyl-alpha-D-glucosamine: step 2/6. Catalyzes the hydrolysis of UDP-3-O-myristoyl-N-acetylglucosamine to form UDP-3-O-myristoylglucosamine and acetate, the committed step in lipid A biosynthesis. The polypeptide is UDP-3-O-acyl-N-acetylglucosamine deacetylase (Neisseria gonorrhoeae (strain ATCC 700825 / FA 1090)).